Here is a 138-residue protein sequence, read N- to C-terminus: Large ribosomal subunit protein uL16 (138 aa).

The protein belongs to the universal ribosomal protein uL16 family. In terms of assembly, part of the 50S ribosomal subunit.

Functionally, binds 23S rRNA and is also seen to make contacts with the A and possibly P site tRNAs. This is Large ribosomal subunit protein uL16 from Mycoplasma genitalium (strain ATCC 33530 / DSM 19775 / NCTC 10195 / G37) (Mycoplasmoides genitalium).